Here is a 118-residue protein sequence, read N- to C-terminus: MAEEGQVIGVHTVDAWNEHLQKGIDDKKLIVVDFTASWCGPCKFIASFYAELAKKMPTVTFLKVDVDELKSVATDWAVEAMPTFMFLKEGKIVDKVVGAKKDELQQTIAKHISSTSTA.

The Thioredoxin domain occupies 2 to 113; that stretch reads AEEGQVIGVH…LQQTIAKHIS (112 aa). Catalysis depends on nucleophile residues Cys-39 and Cys-42. A disulfide bond links Cys-39 and Cys-42.

This sequence belongs to the thioredoxin family. Plant H-type subfamily.

It is found in the cytoplasm. Functionally, participates in various redox reactions through the reversible oxidation of the active center dithiol to a disulfide. The H form is known to activate a number of cytosolic enzymes. The protein is Thioredoxin H-type 2 of Nicotiana tabacum (Common tobacco).